Here is a 1536-residue protein sequence, read N- to C-terminus: Alpha-2-macroglobulin (1536 aa).

Positions 1-23 are cleaved as a signal peptide; sequence MGMKRLIFLVFLLISFSLFGGYA. The segment at residues 919 to 922 is a cross-link (isoglutamyl cysteine thioester (Cys-Gln)); that stretch reads CVEQ.

The protein belongs to the protease inhibitor I39 (alpha-2-macroglobulin) family. Bacterial alpha-2-macroglobulin subfamily.

Its function is as follows. Protects the bacterial cell from peptidases. The chain is Alpha-2-macroglobulin from Thermotoga maritima (strain ATCC 43589 / DSM 3109 / JCM 10099 / NBRC 100826 / MSB8).